Reading from the N-terminus, the 163-residue chain is MALTLRVCSTFLRSCSSNSKSVLSGLSSVRFRSSCPVLISHLDHLVLTVRDLNKTTKFYSEVLGMEVVTFKGDRKALSFGEQKINLHQVGKEFEPKAQTPTPGSADLCLITKTPLKAVADHLKACGVTIEEGPVDRTGAVGPISSLYFRDPDDNLIEVSNYQQ.

One can recognise a VOC domain in the interval 41-161 (HLDHLVLTVR…DDNLIEVSNY (121 aa)).

It belongs to the glyoxalase I family.

The protein is Glyoxalase domain-containing protein 5 (glod5) of Danio rerio (Zebrafish).